The primary structure comprises 268 residues: Probable histidine-binding protein (268 aa).

The first 20 residues, 1–20 (MNMKKWIAAALACSALALSA), serve as a signal peptide directing secretion. Cys-21 carries N-palmitoyl cysteine lipidation. Cys-21 carries S-diacylglycerol cysteine lipidation.

The protein belongs to the bacterial solute-binding protein 3 family.

It is found in the cell membrane. Involved in histidine transport. In Neisseria gonorrhoeae, this protein is Probable histidine-binding protein (hisJ).